A 98-amino-acid polypeptide reads, in one-letter code: Exopolysaccharide production repressor protein (98 aa).

Helical transmembrane passes span 6 to 26 (VFLS…YLNG) and 35 to 55 (TLIC…FLVW). A disordered region spans residues 73–98 (AEAANDEKQPGKVSLRRLNRPHHLNS). The span at 86 to 98 (SLRRLNRPHHLNS) shows a compositional bias: basic residues.

The protein resides in the cell membrane. It participates in glycan metabolism; exopolysaccharide biosynthesis. Its function is as follows. Inhibition of exopolysaccharide synthesis (EPS) and nodulation ability (NOD). In Rhizobium meliloti (strain 1021) (Ensifer meliloti), this protein is Exopolysaccharide production repressor protein (exoX).